The primary structure comprises 117 residues: Histone H1-like protein HC1 (117 aa).

The segment at 57 to 117 (EKSGLMTRKP…KSSKSRYLRK (61 aa)) is disordered. A compositionally biased stretch (basic residues) spans 66–81 (PATKAKKAAATKKAAP). Over residues 82-94 (KPKIQAKAAPKAK) the composition is skewed to low complexity. Basic residues predominate over residues 95-117 (ATTKKTPAKAKAKKSSKSRYLRK).

The protein belongs to the histone H1/H5 family. HCT subfamily.

Functionally, might have a role analogous to that of eukaryotic histone proteins. The chain is Histone H1-like protein HC1 (hctA) from Chlamydia psittaci (Chlamydophila psittaci).